We begin with the raw amino-acid sequence, 77 residues long: U8-lycotoxin-Ls1w (77 aa).

A signal peptide spans 1–20 (MKLIIFTGLVLFAIVSLIEA). Residues 21 to 26 (QAENEK) constitute a propeptide that is removed on maturation.

Belongs to the neurotoxin 19 (CSTX) family. 08 (U8-Lctx) subfamily. Post-translationally, contains 4 disulfide bonds. As to expression, expressed by the venom gland.

Its subcellular location is the secreted. The sequence is that of U8-lycotoxin-Ls1w from Lycosa singoriensis (Wolf spider).